The chain runs to 302 residues: Deoxyribonuclease-1-like 1 (302 aa).

A signal peptide spans 1-18 (MHYPTALLFLILVNGAQA). Residues Glu97 and His148 contribute to the active site. Cys187 and Cys224 are disulfide-bonded. Asn261 is a glycosylation site (N-linked (GlcNAc...) asparagine).

The protein belongs to the DNase I family.

The protein resides in the endoplasmic reticulum. The protein is Deoxyribonuclease-1-like 1 (DNASE1L1) of Chlorocebus aethiops (Green monkey).